Here is a 325-residue protein sequence, read N- to C-terminus: BTB/POZ domain-containing protein KCTD12 (325 aa).

The disordered stretch occupies residues 1-28; sequence MALADSTRGLPNGGGGGGGSGSSSSSAE. Residue alanine 2 is modified to N-acetylalanine. Positions 11–21 are enriched in gly residues; the sequence is PNGGGGGGGSG. The residue at position 119 (tyrosine 119) is a Phosphotyrosine. The segment at 129 to 202 is disordered; sequence LGAPQQPGPG…PLLTPSQSLD (74 aa). 3 positions are modified to phosphoserine: serine 151, serine 171, and serine 185. Threonine 196 carries the post-translational modification Phosphothreonine. Serine 200 carries the phosphoserine modification.

In terms of assembly, interacts as a tetramer with GABBR1 and GABBR2. Present in a variety of fetal organs, with highest expression levels in the cochlea and brain and, in stark contrast, is detected only at extremely low levels in adult organs, such as brain and lung.

The protein localises to the presynaptic cell membrane. The protein resides in the postsynaptic cell membrane. Its function is as follows. Auxiliary subunit of GABA-B receptors that determine the pharmacology and kinetics of the receptor response. Increases agonist potency and markedly alter the G-protein signaling of the receptors by accelerating onset and promoting desensitization. This Homo sapiens (Human) protein is BTB/POZ domain-containing protein KCTD12 (KCTD12).